The primary structure comprises 270 residues: Indole-3-glycerol phosphate synthase (270 aa).

It belongs to the TrpC family.

It carries out the reaction 1-(2-carboxyphenylamino)-1-deoxy-D-ribulose 5-phosphate + H(+) = (1S,2R)-1-C-(indol-3-yl)glycerol 3-phosphate + CO2 + H2O. It functions in the pathway amino-acid biosynthesis; L-tryptophan biosynthesis; L-tryptophan from chorismate: step 4/5. This Salinibacter ruber (strain DSM 13855 / M31) protein is Indole-3-glycerol phosphate synthase.